Reading from the N-terminus, the 271-residue chain is Mannosyl-3-phosphoglycerate phosphatase (271 aa).

The Nucleophile role is filled by D13. Mg(2+)-binding residues include D13, D15, and D214.

It belongs to the HAD-like hydrolase superfamily. MPGP family. Mg(2+) is required as a cofactor.

The protein localises to the cytoplasm. The enzyme catalyses 2-O-(alpha-D-mannosyl)-3-phosphoglycerate + H2O = (2R)-2-O-(alpha-D-mannosyl)-glycerate + phosphate. This Escherichia coli O127:H6 (strain E2348/69 / EPEC) protein is Mannosyl-3-phosphoglycerate phosphatase.